The chain runs to 57 residues: Small ribosomal subunit protein bS21 (57 aa).

Residues 22–57 (QCSKSGVLSEAKKRKHYEKPSEKRKRKATEKRNSRK) form a disordered region. Basic residues predominate over residues 33–57 (KKRKHYEKPSEKRKRKATEKRNSRK).

The protein belongs to the bacterial ribosomal protein bS21 family.

The protein is Small ribosomal subunit protein bS21 of Natranaerobius thermophilus (strain ATCC BAA-1301 / DSM 18059 / JW/NM-WN-LF).